The following is a 401-amino-acid chain: Tumor necrosis factor receptor superfamily member 11B (401 aa).

The signal sequence occupies residues M1–Q21. TNFR-Cys repeat units lie at residues F24–C62, C65–C105, C107–C142, and C145–C185. Cystine bridges form between C41–C54, C44–C62, C65–C80, C83–C97, C87–C105, C107–C118, C124–C142, and C145–C160. A glycan (N-linked (GlcNAc...) asparagine) is linked at N98. N-linked (GlcNAc...) asparagine glycosylation is found at N152, N165, and N178. The cysteines at positions 166 and 185 are disulfide-linked. 2 consecutive Death domains span residues D198–K269 and I270–L365. N289 is a glycosylation site (N-linked (GlcNAc...) asparagine).

Homodimer. Interacts with TNFSF10 and TNFSF11. In terms of processing, N-glycosylated. Contains sialic acid residues. Post-translationally, the N-terminus is blocked. Highly expressed in adult lung, heart, kidney, liver, spleen, thymus, prostate, ovary, small intestine, thyroid, lymph node, trachea, adrenal gland, testis, and bone marrow. Detected at very low levels in brain, placenta and skeletal muscle. Highly expressed in fetal kidney, liver and lung.

The protein localises to the secreted. Functionally, acts as a decoy receptor for TNFSF11/RANKL and thereby neutralizes its function in osteoclastogenesis. Inhibits the activation of osteoclasts and promotes osteoclast apoptosis in vitro. Bone homeostasis seems to depend on the local ratio between TNFSF11 and TNFRSF11B. May also play a role in preventing arterial calcification. May act as decoy receptor for TNFSF10/TRAIL and protect against apoptosis. TNFSF10/TRAIL binding blocks the inhibition of osteoclastogenesis. The chain is Tumor necrosis factor receptor superfamily member 11B (TNFRSF11B) from Homo sapiens (Human).